The sequence spans 338 residues: Fructose-1,6-bisphosphatase 1 (338 aa).

An N-acetylalanine modification is found at Ala-2. Residues 18 to 22 (VMEQG) and 28 to 32 (TGELT) contribute to the AMP site. Positions 69 and 98 each coordinate Mg(2+). 113-114 (KY) is an AMP binding site. Mg(2+)-binding residues include Asp-119, Leu-121, and Asp-122. Position 122-125 (122-125 (DGSS)) interacts with substrate. Arg-141 is a binding site for AMP. Position 151 is an N6-succinyllysine (Lys-151). Substrate is bound by residues 213-216 (NEGY), 244-249 (RYVGSM), Tyr-265, and 275-277 (KLR). A phosphotyrosine mark is found at Tyr-216, Tyr-245, and Tyr-265. A Mg(2+)-binding site is contributed by Glu-281.

The protein belongs to the FBPase class 1 family. Homotetramer. Mg(2+) is required as a cofactor. As to expression, detected in pancreatic beta-cell lines MIN6 and beta-TC and in liver (at protein level). Preferentially expressed in liver, with lower levels detected in pancreatic islets and intestine, and very low levels in blood, muscle, brain and spleen.

It catalyses the reaction beta-D-fructose 1,6-bisphosphate + H2O = beta-D-fructose 6-phosphate + phosphate. It functions in the pathway carbohydrate biosynthesis; gluconeogenesis. With respect to regulation, subject to complex allosteric regulation. The enzyme can assume an active R-state, or an inactive T-state. Intermediate conformations may exist. AMP acts as an allosteric inhibitor. AMP binding affects the turnover of bound substrate and not the affinity for substrate. Fructose 2,6-bisphosphate acts as a competitive inhibitor. Fructose 2,6-bisphosphate and AMP have synergistic effects. Functionally, catalyzes the hydrolysis of fructose 1,6-bisphosphate to fructose 6-phosphate in the presence of divalent cations, acting as a rate-limiting enzyme in gluconeogenesis. Plays a role in regulating glucose sensing and insulin secretion of pancreatic beta-cells. Appears to modulate glycerol gluconeogenesis in liver. Important regulator of appetite and adiposity; increased expression of the protein in liver after nutrient excess increases circulating satiety hormones and reduces appetite-stimulating neuropeptides and thus seems to provide a feedback mechanism to limit weight gain. This chain is Fructose-1,6-bisphosphatase 1 (Fbp1), found in Mus musculus (Mouse).